A 643-amino-acid polypeptide reads, in one-letter code: Phosphoenolpyruvate carboxykinase [GTP] (643 aa).

Residues Arg-102 and 253 to 255 each bind substrate; that span reads YGG. Residues Lys-262 and His-282 each coordinate Mn(2+). Ser-304 is a binding site for substrate. 305–310 contacts GTP; sequence ACGKTN. Residue Cys-306 is part of the active site. Residue Asp-329 participates in Mn(2+) binding. Residue 422–424 participates in substrate binding; that stretch reads NSR. GTP-binding positions include Arg-424, Arg-455, and 548 to 551; that span reads YGDN.

It belongs to the phosphoenolpyruvate carboxykinase [GTP] family. In terms of assembly, monomer. Requires Mn(2+) as cofactor.

It catalyses the reaction oxaloacetate + GTP = phosphoenolpyruvate + GDP + CO2. In parasitic nematodes PEPCK carboxylates phosphoenolpyruvate to oxaloacetate thus introducing the products of glycolysis to mitochondrial metabolism. Functionally, catalyzes the conversion of oxaloacetate (OAA) to phosphoenolpyruvate (PEP), the rate-limiting step in the metabolic pathway that produces glucose from lactate and other precursors derived from the citric acid cycle. The sequence is that of Phosphoenolpyruvate carboxykinase [GTP] (PEPCK) from Ascaris suum (Pig roundworm).